Reading from the N-terminus, the 297-residue chain is Formamidopyrimidine-DNA glycosylase (297 aa).

The active-site Schiff-base intermediate with DNA is Pro2. Glu3 serves as the catalytic Proton donor. Residue Lys61 is the Proton donor; for beta-elimination activity of the active site. Positions 120 and 176 each coordinate DNA. The segment at 262-296 (HVYGRQGQPCDRCGTAIVRESFMNRGSHFCPRCQR) adopts an FPG-type zinc-finger fold. The active-site Proton donor; for delta-elimination activity is Arg286.

The protein belongs to the FPG family. In terms of assembly, monomer. Requires Zn(2+) as cofactor.

It carries out the reaction Hydrolysis of DNA containing ring-opened 7-methylguanine residues, releasing 2,6-diamino-4-hydroxy-5-(N-methyl)formamidopyrimidine.. The catalysed reaction is 2'-deoxyribonucleotide-(2'-deoxyribose 5'-phosphate)-2'-deoxyribonucleotide-DNA = a 3'-end 2'-deoxyribonucleotide-(2,3-dehydro-2,3-deoxyribose 5'-phosphate)-DNA + a 5'-end 5'-phospho-2'-deoxyribonucleoside-DNA + H(+). Involved in base excision repair of DNA damaged by oxidation or by mutagenic agents. Acts as a DNA glycosylase that recognizes and removes damaged bases. Has a preference for oxidized purines, such as 7,8-dihydro-8-oxoguanine (8-oxoG). Has AP (apurinic/apyrimidinic) lyase activity and introduces nicks in the DNA strand. Cleaves the DNA backbone by beta-delta elimination to generate a single-strand break at the site of the removed base with both 3'- and 5'-phosphates. In Leifsonia xyli subsp. xyli (strain CTCB07), this protein is Formamidopyrimidine-DNA glycosylase.